The chain runs to 359 residues: Putative mannose-1-phosphate guanyltransferase (359 aa).

Belongs to the transferase hexapeptide repeat family.

The catalysed reaction is alpha-D-mannose 1-phosphate + GTP + H(+) = GDP-alpha-D-mannose + diphosphate. The chain is Putative mannose-1-phosphate guanyltransferase (mpg1) from Sulfolobus acidocaldarius (strain ATCC 33909 / DSM 639 / JCM 8929 / NBRC 15157 / NCIMB 11770).